A 554-amino-acid polypeptide reads, in one-letter code: Glucose-6-phosphate isomerase (554 aa).

Glu-359 functions as the Proton donor in the catalytic mechanism. Catalysis depends on residues His-390 and Lys-518.

This sequence belongs to the GPI family.

It localises to the cytoplasm. It carries out the reaction alpha-D-glucose 6-phosphate = beta-D-fructose 6-phosphate. It functions in the pathway carbohydrate biosynthesis; gluconeogenesis. It participates in carbohydrate degradation; glycolysis; D-glyceraldehyde 3-phosphate and glycerone phosphate from D-glucose: step 2/4. Its function is as follows. Catalyzes the reversible isomerization of glucose-6-phosphate to fructose-6-phosphate. In Ectopseudomonas mendocina (strain ymp) (Pseudomonas mendocina), this protein is Glucose-6-phosphate isomerase.